We begin with the raw amino-acid sequence, 566 residues long: Heat shock protein 70 homolog C57A7.12 (566 aa).

An ATP-binding site is contributed by Ala-39–Thr-46. Phosphoserine occurs at positions 86 and 500.

The protein belongs to the heat shock protein 70 family.

This chain is Heat shock protein 70 homolog C57A7.12, found in Schizosaccharomyces pombe (strain 972 / ATCC 24843) (Fission yeast).